The chain runs to 232 residues: Ubiquinone biosynthesis O-methyltransferase (232 aa).

Arg36, Gly55, Asp76, and Leu120 together coordinate S-adenosyl-L-methionine.

It belongs to the methyltransferase superfamily. UbiG/COQ3 family.

It catalyses the reaction a 3-demethylubiquinol + S-adenosyl-L-methionine = a ubiquinol + S-adenosyl-L-homocysteine + H(+). The catalysed reaction is a 3-(all-trans-polyprenyl)benzene-1,2-diol + S-adenosyl-L-methionine = a 2-methoxy-6-(all-trans-polyprenyl)phenol + S-adenosyl-L-homocysteine + H(+). The protein operates within cofactor biosynthesis; ubiquinone biosynthesis. Its function is as follows. O-methyltransferase that catalyzes the 2 O-methylation steps in the ubiquinone biosynthetic pathway. This is Ubiquinone biosynthesis O-methyltransferase from Pseudomonas syringae pv. tomato (strain ATCC BAA-871 / DC3000).